The sequence spans 470 residues: Glutamate--tRNA ligase (470 aa).

The 'HIGH' region motif lies at 12–22; it reads PSPTGIFHVGG. Cysteine 103, cysteine 105, cysteine 125, and aspartate 127 together coordinate Zn(2+). Residues 236–240 carry the 'KMSKS' region motif; it reads KLSKR. Lysine 239 contacts ATP.

The protein belongs to the class-I aminoacyl-tRNA synthetase family. Glutamate--tRNA ligase type 1 subfamily. Monomer. Requires Zn(2+) as cofactor.

It localises to the cytoplasm. It catalyses the reaction tRNA(Glu) + L-glutamate + ATP = L-glutamyl-tRNA(Glu) + AMP + diphosphate. Catalyzes the attachment of glutamate to tRNA(Glu) in a two-step reaction: glutamate is first activated by ATP to form Glu-AMP and then transferred to the acceptor end of tRNA(Glu). The protein is Glutamate--tRNA ligase of Frankia alni (strain DSM 45986 / CECT 9034 / ACN14a).